We begin with the raw amino-acid sequence, 290 residues long: Serpentine receptor class U-26 (290 aa).

Transmembrane regions (helical) follow at residues 31–51 (LPMLFLLVPILYIPITIIIIL), 70–90 (LLSAISISQCMCLLFFLADFL), 112–134 (FITILTIFTYHINYSTMIFPFLV), 158–178 (FSIPFICVYPIIFTFFMFPAI), 185–205 (AYPFPFGAIIFRIERTFFGLV), 213–233 (NTLFWMTCCIITNFILLLLLI), and 262–282 (MIFSYLSNAMIVFLLLELHIV).

The protein belongs to the nematode receptor-like protein sru family.

The protein resides in the membrane. This chain is Serpentine receptor class U-26 (sru-26), found in Caenorhabditis elegans.